The following is a 247-amino-acid chain: Proteasome subunit alpha type-7 (247 aa).

The protein belongs to the peptidase T1A family. In terms of assembly, the 26S proteasome consists of a 20S proteasome core and two 19S regulatory subunits. The 20S proteasome core is composed of 28 subunits that are arranged in four stacked rings, resulting in a barrel-shaped structure. The two end rings are each formed by seven alpha subunits, and the two central rings are each formed by seven beta subunits. The catalytic chamber with the active sites is on the inside of the barrel.

The protein resides in the cytoplasm. The protein localises to the nucleus. In terms of biological role, the proteasome is a multicatalytic proteinase complex which is characterized by its ability to cleave peptides with Arg, Phe, Tyr, Leu, and Glu adjacent to the leaving group at neutral or slightly basic pH. The proteasome has an ATP-dependent proteolytic activity. The protein is Proteasome subunit alpha type-7 (PSA4) of Trypanosoma brucei brucei.